We begin with the raw amino-acid sequence, 883 residues long: Mitogen-activated protein kinase kinase kinase YODA (883 aa).

3 disordered regions span residues 28–193, 303–364, and 376–396; these read GFAS…AEMF, CSPE…PPLL, and SAAT…TVSP. Over residues 57-72 the composition is skewed to low complexity; it reads SRLPSRSPSPSTRVSR. Residues 94 to 105 are compositionally biased toward polar residues; the sequence is VTSTDSGMNGSQ. Residues 143 to 165 are compositionally biased toward low complexity; that stretch reads SVSSGSSVGDIPSDSLLSPLASD. Polar residues-rich tracts occupy residues 167 to 189 and 314 to 328; these read ENGN…NKNS and RMTS…QSGA. Residues 400–656 form the Protein kinase domain; sequence WKKGRLLGMG…AAQLLDHAFV (257 aa). Residues 406-414 and Lys-429 each bind ATP; that span reads LGMGSFGHV. The active-site Proton acceptor is Asp-525. Disordered regions lie at residues 712 to 773 and 787 to 838; these read GSGF…GAIP and EGIG…IQPG. Low complexity predominate over residues 733-756; the sequence is SPIFHSHSPHISGRRSPSPISSPH.

The protein belongs to the protein kinase superfamily. STE Ser/Thr protein kinase family. MAP kinase kinase kinase subfamily. In terms of assembly, interacts with ASK7. Interacts with BSK12/SSP. Binds to BASL and MPK6. Expressed in roots, leaves, guard cells, stems, flowers and siliques.

Its subcellular location is the cytoplasm. The protein resides in the cell cortex. It is found in the cell membrane. It catalyses the reaction L-seryl-[protein] + ATP = O-phospho-L-seryl-[protein] + ADP + H(+). The enzyme catalyses L-threonyl-[protein] + ATP = O-phospho-L-threonyl-[protein] + ADP + H(+). With respect to regulation, contains an N-terminal autoinhibitory domain. Its function is as follows. Functions in a MAP kinase cascade that acts as a molecular switch to regulate the first cell fate decisions in the zygote and the early embryo. Promotes elongation of the zygote and development of its basal daughter cell into the extra-embryonic suspensor. In stomatal development, acts downstream of the LRR receptor TMM, but upstream of the MKK4/MKK5-MPK3/MPK6 module to regulate stomatal cell fate before the guard mother cell (GMC) is specified. Plays a central role in both guard cell identity and pattern formation. This MAPK cascade also functions downstream of the ER receptor in regulating coordinated local cell proliferation, which shapes the morphology of plant organs. Upon brassinosteroid signaling, is inhibited by phosphorylation of its auto-inhibitory N-terminal domain by the GSK3-like kinase ASK7. This chain is Mitogen-activated protein kinase kinase kinase YODA, found in Arabidopsis thaliana (Mouse-ear cress).